A 786-amino-acid polypeptide reads, in one-letter code: E3 ubiquitin-protein ligase UHRF1 (786 aa).

Residues 1-78 (MWIQVRTMDG…IQLLVRQSLV (78 aa)) form the Ubiquitin-like domain. 3 positions are modified to phosphoserine: serine 76, serine 98, and serine 102. Residues 82-134 (PVPSSSGGSKERDSELSDTDSGCGLAQSESDKSSNSGEAANEPEGKADEDECD) are disordered. 2 tudor-like regions span residues 139–213 (GLYK…ARAR) and 220–287 (DLQV…IERP). Lysine 283 participates in a covalent cross-link: Glycyl lysine isopeptide (Lys-Gly) (interchain with G-Cter in SUMO2). The tract at residues 300-305 (RKSGPS) is linker. Serine 302 bears the Phosphoserine; by PKA mark. A PHD-type zinc finger spans residues 303–370 (GPSCKHCKDD…EWYCPDCRID (68 aa)). Histone H3R2me0 binding regions lie at residues 337-341 (CDECD) and 357-359 (PPE). At serine 372 the chain carries Phosphoserine. A Glycyl lysine isopeptide (Lys-Gly) (interchain with G-Cter in SUMO2) cross-link involves residue lysine 389. Residue lysine 403 is modified to N6-acetyllysine. Positions 423–586 (GPIPGIPVGT…FLVWRFLLRR (164 aa)) constitute a YDG domain. Residues 449–450 (HV) form a required to promote base flipping region. DNA-binding positions include 467 to 468 (AG) and aspartate 473. Required for formation of a 5-methylcytosine-binding pocket regions lie at residues 470–473 (YEDD) and 482–485 (YTGS). N6-acetyllysine; alternate is present on lysine 550. Lysine 550 is covalently cross-linked (Glycyl lysine isopeptide (Lys-Gly) (interchain with G-Cter in SUMO2); alternate). The segment at 626-679 (NSKQAALDKEEEDGEEGFTSPRKGKRKSKSAGGDGSSRGTPKKTKVEPYSLTTQ) is disordered. A Phosphoserine; by CDK1 modification is found at serine 645. A phosphoserine mark is found at serine 655 and serine 662. A Glycyl lysine isopeptide (Lys-Gly) (interchain with G-Cter in SUMO2) cross-link involves residue lysine 670. The segment at 717-756 (CICCQELVFRPITTVCQHNVCKDCLDRSFKAQVFSCPACR) adopts an RING-type zinc-finger fold.

Interacts with DNMT3A and DNMT3B. Interacts with DNMT1; the interaction is direct. Interacts with USP7; leading to its deubiquitination. Interacts with histone H3. Interacts with HDAC1, but not with HDAC2. Interacts with BLTP3A. Interacts with PML. Interacts with EHMT2. Binds methylated CpG containing oligonucleotides. Interacts with ZNF263; recruited to the SIX3 promoter along with other proteins involved in chromatin modification and transcriptional corepression where it contributes to transcriptional repression. Interacts with UHRF2. Interacts with FANCD2. Interacts with TET1 isoform 2; this interaction induces the recruitment of TET1 isoform 2 to replicating heterochromatin. Post-translationally, phosphorylation at Ser-302 of the linker region decreases the binding to H3K9me3. Phosphorylation at Ser-645 by CDK1 during M phase impairs interaction with USP7, preventing deubiquitination and leading to degradation by the proteasome. Ubiquitinated; which leads to proteasomal degradation. Autoubiquitinated; interaction with USP7 leads to deubiquitination and prevents degradation. Ubiquitination and degradation takes place during M phase, when phosphorylation at Ser-645 prevents interaction with USP7 and subsequent deubiquitination. Polyubiquitination may be stimulated by DNA damage.

The protein resides in the nucleus. The catalysed reaction is S-ubiquitinyl-[E2 ubiquitin-conjugating enzyme]-L-cysteine + [acceptor protein]-L-lysine = [E2 ubiquitin-conjugating enzyme]-L-cysteine + N(6)-ubiquitinyl-[acceptor protein]-L-lysine.. It functions in the pathway protein modification; protein ubiquitination. Multidomain protein that acts as a key epigenetic regulator by bridging DNA methylation and chromatin modification. Specifically recognizes and binds hemimethylated DNA at replication forks via its YDG domain and recruits DNMT1 methyltransferase to ensure faithful propagation of the DNA methylation patterns through DNA replication. In addition to its role in maintenance of DNA methylation, also plays a key role in chromatin modification: through its tudor-like regions and PHD-type zinc fingers, specifically recognizes and binds histone H3 trimethylated at 'Lys-9' (H3K9me3) and unmethylated at 'Arg-2' (H3R2me0), respectively, and recruits chromatin proteins. Enriched in pericentric heterochromatin where it recruits different chromatin modifiers required for this chromatin replication. Also localizes to euchromatic regions where it negatively regulates transcription possibly by impacting DNA methylation and histone modifications. Has E3 ubiquitin-protein ligase activity by mediating the ubiquitination of target proteins such as histone H3 and PML. It is still unclear how E3 ubiquitin-protein ligase activity is related to its role in chromatin in vivo. Plays a role in DNA repair by cooperating with UHRF2 to ensure recruitment of FANCD2 to interstrand cross-links (ICLs) leading to FANCD2 activation. Plays a pivotal role in the establishment of correct spindle architecture by catalyzing the 'Lys-63'-linked ubiquitination of KIF11, thereby controlling KIF11 localization on the spindle. The sequence is that of E3 ubiquitin-protein ligase UHRF1 (UHRF1) from Bos taurus (Bovine).